Consider the following 749-residue polypeptide: RNA-binding protein 5-B (749 aa).

The interval 1–88 is disordered; the sequence is MGSDKRVSRS…YHSDGDYMDH (88 aa). Positions 102-182 constitute an RRM 1 domain; the sequence is KTIMLRGLPI…KTIAMHYSNP (81 aa). The segment at 185-214 adopts a RanBP2-type zinc-finger fold; it reads KFEDWLCNKCGLYNFRRRLKCFRCGAAKAE. The RRM 2 domain maps to 241-325; the sequence is SAIILRNIGP…KTIGVDFAKS (85 aa). Disordered stretches follow at residues 425–471, 520–558, 570–595, and 626–680; these read QMYQ…SVPD, PAADGTGQSGAQPNGANPGTSKEGKEKKEKPKSKTAQQI, NKQKENFKNSFQPLSSRDEERKESAA, and TEEE…NSNI. Residues 429–460 are compositionally biased toward low complexity; that stretch reads QPGSPTQSGTSTAASTTPASTTSTEEATTPTA. Basic and acidic residues-rich tracts occupy residues 585–594 and 627–648; these read SRDEERKESA and EEEKPPNAKYRDRAAERREKYG. One can recognise a G-patch domain in the interval 677–723; it reads NSNIGNKMLQAMGWKEGSGLGRKSQGITAPIQAQVRMRGAGLGAKGS.

Belongs to the RBM5/RBM10 family. Component of the spliceosome A complex (also known as the prespliceosome). Appears to dissociate from the spliceosome upon formation of the spliceosome B complex (also known as the precatalytic spliceosome), in which the heterotrimeric U4/U6.U5 snRNPs are bound.

Its subcellular location is the nucleus. Component of the spliceosome A complex. Regulates alternative splicing of a number of mRNAs. May modulate splice site pairing after recruitment of the U1 and U2 snRNPs to the 5' and 3' splice sites of the intron. In Xenopus laevis (African clawed frog), this protein is RNA-binding protein 5-B (rbm5-b).